The sequence spans 229 residues: Ras-related protein rab-39 (229 aa).

73–77 (DTAGQ) serves as a coordination point for GTP. Residues C227 and C229 are each lipidated (S-geranylgeranyl cysteine). C229 bears the Cysteine methyl ester mark.

This sequence belongs to the small GTPase superfamily. Rab family. Interacts (in GTP-bound form) with Ras association domain-containing protein rsf-1.

The protein resides in the cell membrane. Its subcellular location is the cytoplasmic vesicle membrane. It is found in the golgi apparatus. Its function is as follows. Small GTPases Rab involved in autophagy. The small GTPases Rab are key regulators of intracellular membrane trafficking, from the formation of transport vesicles to their fusion with membranes. Rabs cycle between an inactive GDP-bound form and an active GTP-bound form that is able to recruit to membranes different sets of downstream effectors directly responsible for vesicle formation, movement, tethering and fusion. Involved in positively regulating the oxidative stress response, perhaps in concert with the Ras association domain-containing protein rsf-1. This Caenorhabditis elegans protein is Ras-related protein rab-39.